A 349-amino-acid chain; its full sequence is MENVNMVKSKAALLKKFSEPLSIEDVNIPEPQGEEVLIRIGGAGVCRTDLRVWKGVEAKQGFRLPIILGHENAGTIVEVGELAKVKKGDNVVVYATWGDLTCRYCREGKFNICKNQIIPGQTTNGGFSEYMLVKSSRWLVKLNSLSPVEAAPLADAGTTSMGAIRQALPFISKFAEPVVIVNGIGGLAVYTIQILKALMKNITIVGISRSKKHRDFALELGADYVSEMKDAESLINKLTDGLGASIAIDLVGTEETTYNLGKLLAQEGAIILVGMEGKRVSLEAFDTAVWNKKLLGSNYGSLNDLEDVVRLSESGKIKPYIIKVPLDDINKAFTNLDEGRVDGRQVITP.

Zn(2+) contacts are provided by Cys-46, His-70, Asp-99, Cys-102, Cys-105, Cys-113, and Asp-155.

It belongs to the zinc-containing alcohol dehydrogenase family. In terms of assembly, homotetramer. Dimer of dimers. The cofactor is Zn(2+).

It catalyses the reaction D-arabinose + NADP(+) = D-arabinono-1,4-lactone + NADPH + H(+). Its function is as follows. Participates in a pentose oxidation pathway that converts D-arabinose to 2-oxoglutarate. Catalyzes the NADP-dependent conversion of D-arabinose to D-arabinono-1,4-lactone. In vitro, can also use L-fucose, L-galactose and D-ribose. Shows highest activity with L-fucose, in combinaison with NAD, and lower activity toward L-galactose and D-ribose. When acting on its physiological substrate, D-arabinose, shows a clear preference for NADP over NAD. The protein is D-arabinose 1-dehydrogenase (NADP(+)) of Saccharolobus solfataricus (strain ATCC 35092 / DSM 1617 / JCM 11322 / P2) (Sulfolobus solfataricus).